The following is a 967-amino-acid chain: Putative helicase MOV-10 (967 aa).

The disordered stretch occupies residues 85–117; it reads ADQYRRPRTDTEVSAPAPGQQPSSGPPAPQSRA. Over residues 98–107 the composition is skewed to low complexity; sequence SAPAPGQQPS. 516–523 is an ATP binding site; that stretch reads GPPGTGKT. Residues 638-641 carry the DEAG box motif; sequence DECG.

The protein belongs to the DNA2/NAM7 helicase family. SDE3 subfamily.

The protein resides in the cytoplasm. It is found in the P-body. The protein localises to the cytoplasmic ribonucleoprotein granule. Its subcellular location is the stress granule. It localises to the nucleus. The catalysed reaction is ATP + H2O = ADP + phosphate + H(+). In terms of biological role, 5' to 3' RNA helicase that is involved in a number of cellular roles ranging from mRNA metabolism and translation, modulation of viral infectivity, inhibition of retrotransposition, or regulation of synaptic transmission. Plays an important role in innate antiviral immunity by promoting type I interferon production. Required for microRNA (miRNA)-mediated gene silencing by the RNA-induced silencing complex (RISC). Required for both miRNA-mediated translational repression and miRNA-mediated cleavage of complementary mRNAs by RISC. In cooperation with FMR1, regulates miRNA-mediated translational repression by AGO2. Restricts retrotransposition of long interspersed element-1 (LINE-1). Required for embryonic viability and for normal central nervous system development and function. May function as a messenger ribonucleoprotein (mRNP) clearance factor. This Gallus gallus (Chicken) protein is Putative helicase MOV-10 (MOV10).